The sequence spans 513 residues: Secreted LysM effector Vd6LysM (513 aa).

Positions 1-19 are cleaved as a signal peptide; the sequence is MSFIKSLLLAAAAVASVSA. 4 consecutive LysM domains span residues 38-85, 136-182, 219-265, and 302-348; these read SYWV…SYCV, KFHW…NVCV, and KFHW…QVCV. Positions 357-367 are enriched in low complexity; the sequence is TTTRPPTTTAP. Residues 357-377 are disordered; it reads TTTRPPTTTAPGNGVSTPQPT. 2 consecutive LysM domains span residues 387-433 and 465-511; these read KFHW…NVCV.

It belongs to the secreted LysM effector family.

Its function is as follows. Might have a role in sequestration of chitin oligosaccharides (breakdown products of fungal cell walls that are released during invasion and act as triggers of host immunity) to dampen host defense. Does not play an important role during host colonization. This chain is Secreted LysM effector Vd6LysM, found in Verticillium dahliae (strain VdLs.17 / ATCC MYA-4575 / FGSC 10137) (Verticillium wilt).